The chain runs to 360 residues: Histidinol-phosphate aminotransferase (360 aa).

Lys-222 carries the post-translational modification N6-(pyridoxal phosphate)lysine.

Belongs to the class-II pyridoxal-phosphate-dependent aminotransferase family. Histidinol-phosphate aminotransferase subfamily. As to quaternary structure, homodimer. The cofactor is pyridoxal 5'-phosphate.

It carries out the reaction L-histidinol phosphate + 2-oxoglutarate = 3-(imidazol-4-yl)-2-oxopropyl phosphate + L-glutamate. It participates in amino-acid biosynthesis; L-histidine biosynthesis; L-histidine from 5-phospho-alpha-D-ribose 1-diphosphate: step 7/9. This is Histidinol-phosphate aminotransferase from Listeria welshimeri serovar 6b (strain ATCC 35897 / DSM 20650 / CCUG 15529 / CIP 8149 / NCTC 11857 / SLCC 5334 / V8).